The primary structure comprises 160 residues: MSQVTGFDQSNVAQYSSFDPLGSLEHAGSNLGNFIQRNNPFPSLSQSASHTFDDVRSDSGKIFDELKSEADKFYDDAKHGLSDIDYRDFYASDPGNTVLRASMQSPYLNSYMDINNAPNVIPLQAPPIVTNRNSKDYNILFVVVILLLLFVAWRCYVNKR.

A helical membrane pass occupies residues 137–157 (YNILFVVVILLLLFVAWRCYV).

The protein localises to the host membrane. It localises to the virion. This is an uncharacterized protein from Acanthamoeba polyphaga mimivirus (APMV).